Here is a 441-residue protein sequence, read N- to C-terminus: Chitinase-like protein Idgf3 (441 aa).

An N-terminal signal peptide occupies residues methionine 1–alanine 23. The region spanning proline 25 to leucine 441 is the GH18 domain. Cysteine 29 and cysteine 56 are disulfide-bonded. Asparagine 221 carries N-linked (GlcNAc...) asparagine glycosylation. The tract at residues glycine 310–lysine 331 is disordered. The cysteines at positions 342 and 425 are disulfide-linked.

It belongs to the glycosyl hydrolase 18 family. IDGF subfamily. Glycosylated.

The protein resides in the secreted. Cooperates with insulin-like peptides to stimulate the proliferation, polarization and motility of imaginal disk cells. May act by stabilizing the binding of insulin-like peptides to its receptor through a simultaneous interaction with both molecules to form a multiprotein signaling complex. This Drosophila simulans (Fruit fly) protein is Chitinase-like protein Idgf3 (Idgf3).